The chain runs to 201 residues: Recombination protein RecR (201 aa).

The segment at 60–75 (CSVCGNVDSCDPCTIC) adopts a C4-type zinc-finger fold. In terms of domain architecture, Toprim spans 83–178 (STLIVVETVG…RTTRLAHGVP (96 aa)).

This sequence belongs to the RecR family.

May play a role in DNA repair. It seems to be involved in an RecBC-independent recombinational process of DNA repair. It may act with RecF and RecO. This Methylocella silvestris (strain DSM 15510 / CIP 108128 / LMG 27833 / NCIMB 13906 / BL2) protein is Recombination protein RecR.